The chain runs to 254 residues: Pre-miRNA 5'-monophosphate methyltransferase (254 aa).

The region spanning Glu-34 to Gln-254 is the Bin3-type SAM domain. S-adenosyl-L-methionine-binding positions include Arg-36, Asn-66, Asp-99, and Asp-124–Ile-125.

It belongs to the methyltransferase superfamily.

It localises to the cytoplasm. The enzyme catalyses a 5'-end 5'-phospho-ribonucleoside-RNA + S-adenosyl-L-methionine = a 5'-end (5'-methylphospho)-ribonucleoside-RNA + S-adenosyl-L-homocysteine. It carries out the reaction a 5'-end 5'-phospho-ribonucleoside-RNA + 2 S-adenosyl-L-methionine = a 5'-end (5'-bismethylphospho)-ribonucleoside-RNA + 2 S-adenosyl-L-homocysteine. Functionally, O-methyltransferase that specifically monomethylates 5'-monophosphate of cytoplasmic histidyl tRNA (tRNA(His)), acting as a capping enzyme by protecting tRNA(His) from cleavage by DICER1. Also able, with less efficiently, to methylate the 5' monophosphate of a subset of pre-miRNAs, acting as a negative regulator of miRNA processing. The 5' monophosphate of pre-miRNAs is recognized by DICER1 and is required for pre-miRNAs processing: methylation at this position reduces the processing of pre-miRNAs by DICER1. Was also reported to mediate dimethylation of pre-miR-145; however dimethylation cannot be reproduced by another group which observes a monomethylation of pre-miR-145. This Danio rerio (Zebrafish) protein is Pre-miRNA 5'-monophosphate methyltransferase (bcdin3d).